Consider the following 610-residue polypeptide: UvrABC system protein C (610 aa).

Residues 16–94 (SQPGVYRMYD…IKLYQPRYNV (79 aa)) enclose the GIY-YIG domain. A UVR domain is found at 204–239 (DQVLTQLIARMEKASQDLAFEEAARIRDQIQAVRRV).

This sequence belongs to the UvrC family. Interacts with UvrB in an incision complex.

It localises to the cytoplasm. In terms of biological role, the UvrABC repair system catalyzes the recognition and processing of DNA lesions. UvrC both incises the 5' and 3' sides of the lesion. The N-terminal half is responsible for the 3' incision and the C-terminal half is responsible for the 5' incision. In Salmonella enteritidis PT4 (strain P125109), this protein is UvrABC system protein C.